The sequence spans 487 residues: Bifunctional cytokinin biosynthesis protein (487 aa).

The adenylate isopentenyltransferase stretch occupies residues Met1 to Ser266. The tract at residues Thr267–Val487 is cytokinin riboside 5'-monophosphate phosphoribohydrolase. Substrate is bound by residues Glu352, Arg380–Lys381, Gly403–Glu409, and Thr415.

It in the N-terminal section; belongs to the IPP transferase family. In the C-terminal section; belongs to the LOG family.

It carries out the reaction dimethylallyl diphosphate + AMP = N(6)-(dimethylallyl)adenosine 5'-phosphate + diphosphate. It catalyses the reaction N(6)-(dimethylallyl)adenosine 5'-phosphate + H2O = N(6)-dimethylallyladenine + D-ribose 5-phosphate. The catalysed reaction is 9-ribosyl-trans-zeatin 5'-phosphate + H2O = trans-zeatin + D-ribose 5-phosphate. Its pathway is secondary metabolite biosynthesis. Bifunctional cytokinin synthesis protein; part of the gene cluster that mediates the biosynthesis of cytokinins such as fusatin, fusatinic acids or 8-oxofusatin, known for their growth promoting and anti-senescence activities toward host plants. FCK1 is a bifunctional enzyme that performs the first steps in the biosynthesis of Fusarium cytokinins. It first condenses adenosine monophosphate (AMP) with dimethylallyl diphosphate (DMAPP) to yield isoprenyl adenosine monophosphate. It then catalyzes the removal of the phosphoribose to produce isopentenylaldehyde. The cytochrome P450 monooxygenase then converts isopentenylaldehyde to trans-zeatin. A condensation step converts trans-zeatin to fusatin which is further modified to produce fusatinic acid. The mechanism for oxidation of fusatin to fusatinic acid remains unknown. 8-oxofusatin could be produced through several pathways, via direct oxygenation of fusatin, or via the 8-oxo-pentenyladenine intermediate which itself must arise from either the prenylation of 8-oxo-AMP by FCK1 and/or oxygenation of isopentenylaldehyde. Both the FCK3 and FCK4 enzymes act downstream of the identified cytokinins to produce yet unidentified compounds. The polypeptide is Bifunctional cytokinin biosynthesis protein (Fusarium pseudograminearum (strain CS3096) (Wheat and barley crown-rot fungus)).